The following is a 398-amino-acid chain: Phospholipase C (398 aa).

The signal sequence occupies residues 1-28 (MKRKICKALICATLATSLWAGASTKVYA). 9 residues coordinate Zn(2+): Trp-29, His-39, Asp-84, His-96, His-154, Asp-158, His-164, His-176, and Glu-180. The region spanning 29–278 (WDGKIDGTGT…HDVSEGNDPS (250 aa)) is the Zn-dependent PLC domain. The tract at residues 275-283 (NDPSVGKNV) is linker. A PLAT domain is found at 284–398 (KELVAYISTS…ISGNSTYNIK (115 aa)). The Ca(2+) site is built by Asp-297, Gly-299, Thr-300, Asp-301, Asp-321, Asn-322, Gly-324, Asn-325, Asp-326, Asp-364, and Ala-365.

Belongs to the bacterial zinc-metallophospholipase C family. Requires Ca(2+) as cofactor. It depends on Zn(2+) as a cofactor.

It is found in the secreted. The enzyme catalyses a 1,2-diacyl-sn-glycero-3-phosphocholine + H2O = phosphocholine + a 1,2-diacyl-sn-glycerol + H(+). Bacterial hemolysins are exotoxins that attack blood cell membranes and cause cell rupture. Constitutes an essential virulence factor in gas gangrene. Binds to eukaryotic membranes where it hydrolyzes both phosphatidylcholine and sphingomyelin. The diacylglycerol produced can activate both the arachidonic acid pathway, leading to modulation of the inflammatory response cascade and thrombosis, and protein kinase C, leading to activation of eukaryotic phospholipases and further membrane damage. Acts on human and mouse erythrocytes, but not on rabbit or horse erythrocytes. This Clostridium perfringens (strain 13 / Type A) protein is Phospholipase C (plc).